Reading from the N-terminus, the 528-residue chain is Probable feruloyl esterase B-1 (528 aa).

The N-terminal stretch at 1–19 is a signal peptide; sequence MMWWFLLIGLASAAATASS. Cystine bridges form between C29/C78, C64/C117, C190/C445, C259/C276, C285/C295, and C505/C527. N-linked (GlcNAc...) asparagine glycosylation is found at N83 and N101. S191 (acyl-ester intermediate) is an active-site residue. Residues D260, D263, A265, D267, and I269 each coordinate Ca(2+). N-linked (GlcNAc...) asparagine glycosylation is found at N286, N354, and N385. Residues D404 and H444 each act as charge relay system in the active site.

It belongs to the tannase family.

It localises to the secreted. The catalysed reaction is feruloyl-polysaccharide + H2O = ferulate + polysaccharide.. Functionally, involved in degradation of plant cell walls. Hydrolyzes the feruloyl-arabinose ester bond in arabinoxylans as well as the feruloyl-galactose and feruloyl-arabinose ester bonds in pectin. The chain is Probable feruloyl esterase B-1 (faeB-1) from Aspergillus fumigatus (strain CBS 144.89 / FGSC A1163 / CEA10) (Neosartorya fumigata).